A 220-amino-acid chain; its full sequence is Urease accessory protein UreF (220 aa).

Belongs to the UreF family. In terms of assembly, ureD, UreF and UreG form a complex that acts as a GTP-hydrolysis-dependent molecular chaperone, activating the urease apoprotein by helping to assemble the nickel containing metallocenter of UreC. The UreE protein probably delivers the nickel.

It localises to the cytoplasm. Functionally, required for maturation of urease via the functional incorporation of the urease nickel metallocenter. The polypeptide is Urease accessory protein UreF (Bordetella bronchiseptica (strain ATCC BAA-588 / NCTC 13252 / RB50) (Alcaligenes bronchisepticus)).